The primary structure comprises 427 residues: SAC3 domain-containing protein 1 (427 aa).

Basic and acidic residues-rich tracts occupy residues 1 to 10 and 117 to 127; these read MGRFKGENRS and ADPKRTVKEYS. Disordered regions lie at residues 1–53 and 101–143; these read MGRF…QDAV and LHRL…LLRP. Pro residues predominate over residues 134-143; that stretch reads PRPPPSLLRP. The PCI domain occupies 229-397; the sequence is QVQEGFGSLR…EGLPPPGAYH (169 aa). S425 bears the Phosphoserine mark.

This sequence belongs to the SAC3 family. As to quaternary structure, may be part of a SEM1-containing complex. In terms of tissue distribution, present in spleen cells (at protein level).

Its subcellular location is the cytoplasm. The protein localises to the cytoskeleton. It localises to the microtubule organizing center. The protein resides in the centrosome. It is found in the spindle. Involved in centrosome duplication and mitotic progression. In Mus musculus (Mouse), this protein is SAC3 domain-containing protein 1 (Sac3d1).